The chain runs to 830 residues: Leucine--tRNA ligase (830 aa).

A 'HIGH' region motif is present at residues 34-44 (PYPSGNIHMGH). The short motif at 592–596 (KMSKS) is the 'KMSKS' region element. Residue K595 coordinates ATP.

Belongs to the class-I aminoacyl-tRNA synthetase family.

It localises to the cytoplasm. It carries out the reaction tRNA(Leu) + L-leucine + ATP = L-leucyl-tRNA(Leu) + AMP + diphosphate. The chain is Leucine--tRNA ligase from Ehrlichia ruminantium (strain Gardel).